The following is a 145-amino-acid chain: Mini-ribonuclease 3 (145 aa).

Asp27 is an active-site residue.

Belongs to the MrnC RNase family. As to quaternary structure, homodimer. It depends on Mg(2+) as a cofactor.

The protein resides in the cytoplasm. Involved in correct processing of both the 5' and 3' ends of 23S rRNA precursor. Processes 30S rRNA precursor transcript even in absence of ribonuclease 3 (Rnc); Rnc processes 30S rRNA into smaller rRNA precursors. This chain is Mini-ribonuclease 3, found in Kosmotoga olearia (strain ATCC BAA-1733 / DSM 21960 / TBF 19.5.1).